We begin with the raw amino-acid sequence, 376 residues long: Natterin-2 (376 aa).

The first 18 residues, 1 to 18 (MNLSVLLVTLLLLSWTSA), serve as a signal peptide directing secretion. Residues 19–27 (EKDLKVRVA) constitute a propeptide that is removed on maturation.

It belongs to the natterin family. In terms of processing, contains 4 disulfide bonds. Expressed by the venom gland.

It is found in the secreted. Inhibited by tissue-kallikrein inhibitor TKI and trasylol. Plasma kallikrein inhibitor PKSI527 and classical inhibitors of serine-, metallo-, thiol- or aspartate-peptidases evokes a minor inhibition of the peptide digestion. Shows nociceptive, edema-inducing and kininogenase activity with release of kallidin from low molecular weight kininogen. The cleavage occurs at Met-Lys bonds. In Thalassophryne nattereri (Copper Joe toadfish), this protein is Natterin-2.